The chain runs to 473 residues: MKTLYSLRRFYPVETLFNGTLALAGRDQETTGFAWWAGNARLINLSGKLLGAHVAHAGLIVFWAGGMNLFEVAHFVPEKPMYEQGLILLPHLATLGWGVGPGGEVIDTFPYFVSGVLHLISSAVLGFGGIYHALLGPETLEESFPFFGYVWKDRNKMTTILGIHLILLGIGAFLLVFKALYFGGVYDTWAPGGGDVRKITNLTLNPSIIFGYLLKSPFGGEGWIVSVDDLEDIIGGHVWLGSICIFGGIWHILTKPFAWARRALVWSGEAYLSYSLAALSVFGFIACCFVWFNNTAYPSEFYGPTGPEASQAQAFTFLVRDQRLGANVGSAQGPTGLGKYLMRSPTGEVIFGGETMRFWDLRAPWLEPLRGPNGLDLSRLKKDIQPWQERRSAEYMTHAPLGSLNSVGGVATEINAVNYVSPRSWLATSHFVLGFFLFVGHLWHAGRARAAAAGFEKGIDRDFEPVLSMTPLN.

The propeptide occupies 1–14 (MKTLYSLRRFYPVE). T15 carries the post-translational modification N-acetylthreonine. T15 is modified (phosphothreonine). The next 5 helical transmembrane spans lie at 69 to 93 (LFEV…PHLA), 134 to 155 (LLGP…KDRN), 178 to 200 (KALY…RKIT), 255 to 275 (KPFA…LSYS), and 291 to 312 (WFNN…ASQA). E367 is a [CaMn4O5] cluster binding site. The chain crosses the membrane as a helical span at residues 447–471 (RARAAAAGFEKGIDRDFEPVLSMTP).

This sequence belongs to the PsbB/PsbC family. PsbC subfamily. As to quaternary structure, PSII is composed of 1 copy each of membrane proteins PsbA, PsbB, PsbC, PsbD, PsbE, PsbF, PsbH, PsbI, PsbJ, PsbK, PsbL, PsbM, PsbT, PsbX, PsbY, PsbZ, Psb30/Ycf12, at least 3 peripheral proteins of the oxygen-evolving complex and a large number of cofactors. It forms dimeric complexes. Binds multiple chlorophylls and provides some of the ligands for the Ca-4Mn-5O cluster of the oxygen-evolving complex. It may also provide a ligand for a Cl- that is required for oxygen evolution. PSII binds additional chlorophylls, carotenoids and specific lipids. is required as a cofactor.

Its subcellular location is the plastid. The protein resides in the chloroplast thylakoid membrane. Its function is as follows. One of the components of the core complex of photosystem II (PSII). It binds chlorophyll and helps catalyze the primary light-induced photochemical processes of PSII. PSII is a light-driven water:plastoquinone oxidoreductase, using light energy to abstract electrons from H(2)O, generating O(2) and a proton gradient subsequently used for ATP formation. The sequence is that of Photosystem II CP43 reaction center protein from Daucus carota (Wild carrot).